Consider the following 347-residue polypeptide: Dihydroorotate dehydrogenase (quinone) (347 aa).

Residues 62-66 and threonine 86 contribute to the FMN site; that span reads AGLDK. Residue lysine 66 coordinates substrate. 111–115 is a binding site for substrate; the sequence is NRMGF. FMN-binding residues include asparagine 142 and asparagine 175. Residue asparagine 175 coordinates substrate. The active-site Nucleophile is the serine 178. Substrate is bound at residue asparagine 180. Positions 220 and 248 each coordinate FMN. 249–250 lines the substrate pocket; sequence NT. FMN-binding positions include glycine 271, glycine 300, and 321–322; that span reads YS.

The protein belongs to the dihydroorotate dehydrogenase family. Type 2 subfamily. In terms of assembly, monomer. FMN serves as cofactor.

It localises to the cell membrane. The enzyme catalyses (S)-dihydroorotate + a quinone = orotate + a quinol. The protein operates within pyrimidine metabolism; UMP biosynthesis via de novo pathway; orotate from (S)-dihydroorotate (quinone route): step 1/1. In terms of biological role, catalyzes the conversion of dihydroorotate to orotate with quinone as electron acceptor. The protein is Dihydroorotate dehydrogenase (quinone) of Dechloromonas aromatica (strain RCB).